The chain runs to 253 residues: Small ribosomal subunit protein uS3 (253 aa).

The 69-residue stretch at 39 to 107 (VRRALKKRLY…EVHLNIVEIR (69 aa)) folds into the KH type-2 domain. Residues 215-253 (LDKRLAGESGPAGEGGGRERGDRPDRGPRRERRGEPSNA) are disordered. A compositionally biased stretch (basic and acidic residues) spans 230 to 253 (GGRERGDRPDRGPRRERRGEPSNA).

Belongs to the universal ribosomal protein uS3 family. In terms of assembly, part of the 30S ribosomal subunit. Forms a tight complex with proteins S10 and S14.

In terms of biological role, binds the lower part of the 30S subunit head. Binds mRNA in the 70S ribosome, positioning it for translation. The protein is Small ribosomal subunit protein uS3 of Phenylobacterium zucineum (strain HLK1).